The primary structure comprises 414 residues: Esterase FrsA (414 aa).

This sequence belongs to the FrsA family.

It catalyses the reaction a carboxylic ester + H2O = an alcohol + a carboxylate + H(+). Catalyzes the hydrolysis of esters. The chain is Esterase FrsA from Shigella boydii serotype 4 (strain Sb227).